The chain runs to 540 residues: 2,3-bisphosphoglycerate-independent phosphoglycerate mutase (540 aa).

Aspartate 13 and serine 63 together coordinate Mn(2+). The active-site Phosphoserine intermediate is serine 63. Substrate is bound by residues histidine 124, arginine 154–aspartate 155, arginine 186, arginine 192, arginine 262–arginine 265, and lysine 356. Mn(2+) contacts are provided by aspartate 423, histidine 427, aspartate 464, histidine 465, and histidine 483.

This sequence belongs to the BPG-independent phosphoglycerate mutase family. In terms of assembly, monomer. It depends on Mn(2+) as a cofactor.

The catalysed reaction is (2R)-2-phosphoglycerate = (2R)-3-phosphoglycerate. It functions in the pathway carbohydrate degradation; glycolysis; pyruvate from D-glyceraldehyde 3-phosphate: step 3/5. Catalyzes the interconversion of 2-phosphoglycerate and 3-phosphoglycerate. This is 2,3-bisphosphoglycerate-independent phosphoglycerate mutase from Chloroflexus aurantiacus (strain ATCC 29366 / DSM 635 / J-10-fl).